Here is a 275-residue protein sequence, read N- to C-terminus: 3-methyl-2-oxobutanoate hydroxymethyltransferase (275 aa).

Positions 44 and 83 each coordinate Mg(2+). 3-methyl-2-oxobutanoate is bound by residues 44–45 (DS), D83, and K113. E115 contributes to the Mg(2+) binding site. The active-site Proton acceptor is the E182.

Belongs to the PanB family. As to quaternary structure, homodecamer; pentamer of dimers. Requires Mg(2+) as cofactor.

The protein localises to the cytoplasm. The enzyme catalyses 3-methyl-2-oxobutanoate + (6R)-5,10-methylene-5,6,7,8-tetrahydrofolate + H2O = 2-dehydropantoate + (6S)-5,6,7,8-tetrahydrofolate. It participates in cofactor biosynthesis; (R)-pantothenate biosynthesis; (R)-pantoate from 3-methyl-2-oxobutanoate: step 1/2. Its function is as follows. Catalyzes the reversible reaction in which hydroxymethyl group from 5,10-methylenetetrahydrofolate is transferred onto alpha-ketoisovalerate to form ketopantoate. The chain is 3-methyl-2-oxobutanoate hydroxymethyltransferase from Enterococcus faecalis (strain ATCC 700802 / V583).